The following is a 248-amino-acid chain: Pulmonary surfactant-associated protein A (248 aa).

Positions 1–17 are cleaved as a signal peptide; that stretch reads MLLCSLTLMLLWMVASG. Residues 28-100 form the Collagen-like domain; it reads GSPGIPGTPG…PGERGPPGFP (73 aa). The disordered stretch occupies residues 29 to 103; that stretch reads SPGIPGTPGS…RGPPGFPAYL (75 aa). Over residues 42 to 51 the composition is skewed to basic and acidic residues; sequence PGRDGRDGIK. Residues 54–65 show a composition bias toward pro residues; the sequence is PGPPGPMGPPGG. A compositionally biased stretch (low complexity) spans 69–82; the sequence is LPGRDGMTGAPGLP. The span at 84 to 93 shows a compositional bias: basic and acidic residues; that stretch reads ERGEKGEPGE. The C-type lectin domain occupies 127–247; sequence LQGSMLEVGE…CLQYRLAICE (121 aa). 2 cysteine pairs are disulfide-bonded: Cys155–Cys246 and Cys224–Cys238. A glycan (N-linked (GlcNAc...) asparagine) is linked at Asn207. Ca(2+) is bound by residues Glu215, Arg217, Asn234, and Asp235.

The protein belongs to the SFTPA family. In terms of assembly, oligomeric complex of 6 set of homotrimers.

It localises to the secreted. The protein resides in the extracellular space. It is found in the extracellular matrix. The protein localises to the surface film. In terms of biological role, in presence of calcium ions, it binds to surfactant phospholipids and contributes to lower the surface tension at the air-liquid interface in the alveoli of the mammalian lung and is essential for normal respiration. Enhances the expression of MYO18A/SP-R210 on alveolar macrophages. This is Pulmonary surfactant-associated protein A (SFTPA1) from Ovis aries (Sheep).